The primary structure comprises 297 residues: 33 kDa chaperonin (297 aa).

2 disulfides stabilise this stretch: Cys239-Cys241 and Cys272-Cys275.

This sequence belongs to the HSP33 family. Under oxidizing conditions two disulfide bonds are formed involving the reactive cysteines. Under reducing conditions zinc is bound to the reactive cysteines and the protein is inactive.

Its subcellular location is the cytoplasm. Its function is as follows. Redox regulated molecular chaperone. Protects both thermally unfolding and oxidatively damaged proteins from irreversible aggregation. Plays an important role in the bacterial defense system toward oxidative stress. The polypeptide is 33 kDa chaperonin (Synechococcus elongatus (strain ATCC 33912 / PCC 7942 / FACHB-805) (Anacystis nidulans R2)).